The following is a 396-amino-acid chain: S-adenosylmethionine synthase (396 aa).

An ATP-binding site is contributed by H15. D17 lines the Mg(2+) pocket. E43 serves as a coordination point for K(+). L-methionine is bound by residues E56 and Q99. The segment at 99–109 is flexible loop; it reads QSPDIALGVNR. ATP-binding positions include 175-177, 241-242, D250, 256-257, A273, and K277; these read DGK, RF, and RK. D250 contacts L-methionine. An L-methionine-binding site is contributed by K281.

This sequence belongs to the AdoMet synthase family. Homotetramer; dimer of dimers. Mg(2+) is required as a cofactor. The cofactor is K(+).

The protein resides in the cytoplasm. It catalyses the reaction L-methionine + ATP + H2O = S-adenosyl-L-methionine + phosphate + diphosphate. Its pathway is amino-acid biosynthesis; S-adenosyl-L-methionine biosynthesis; S-adenosyl-L-methionine from L-methionine: step 1/1. In terms of biological role, catalyzes the formation of S-adenosylmethionine (AdoMet) from methionine and ATP. The overall synthetic reaction is composed of two sequential steps, AdoMet formation and the subsequent tripolyphosphate hydrolysis which occurs prior to release of AdoMet from the enzyme. The protein is S-adenosylmethionine synthase of Carboxydothermus hydrogenoformans (strain ATCC BAA-161 / DSM 6008 / Z-2901).